The following is a 356-amino-acid chain: Probable butyrate kinase (356 aa).

The protein belongs to the acetokinase family.

Its subcellular location is the cytoplasm. The enzyme catalyses butanoate + ATP = butanoyl phosphate + ADP. This is Probable butyrate kinase from Coprothermobacter proteolyticus (strain ATCC 35245 / DSM 5265 / OCM 4 / BT).